The primary structure comprises 189 residues: HGPRTase-like protein 1 (189 aa).

Belongs to the purine/pyrimidine phosphoribosyltransferase family. Archaeal HPRT subfamily.

In terms of biological role, may catalyze a purine salvage reaction, the substrate is unknown. In Natrialba magadii (strain ATCC 43099 / DSM 3394 / CCM 3739 / CIP 104546 / IAM 13178 / JCM 8861 / NBRC 102185 / NCIMB 2190 / MS3) (Natronobacterium magadii), this protein is HGPRTase-like protein 1.